We begin with the raw amino-acid sequence, 345 residues long: Fe-S cluster assembly protein DRE2 (345 aa).

The segment at 11-166 (FSHSSNGVVL…SIGSSSGSSS (156 aa)) is N-terminal SAM-like domain. The interval 147-166 (SKPATASSSFSIGSSSGSSS) is disordered. Residues 153–166 (SSSFSIGSSSGSSS) are compositionally biased toward low complexity. The tract at residues 167-210 (ALPLRRKLGSGASANAKKSLWATQPASANDLIDEASLLRDADFV) is linker. [2Fe-2S] cluster is bound by residues Cys220, Cys233, Cys236, and Cys238. The tract at residues 220–238 (CDVGAGQGKKKKACKGCTC) is fe-S binding site A. Positions 307, 310, 318, and 321 each coordinate [4Fe-4S] cluster. 2 short sequence motifs (cx2C motif) span residues 307 to 310 (CGSC) and 318 to 321 (CSSC). A fe-S binding site B region spans residues 307–321 (CGSCFLGDAFRCSSC).

It belongs to the anamorsin family. In terms of assembly, monomer. Interacts with TAH18. Interacts with MIA40. It depends on [2Fe-2S] cluster as a cofactor. [4Fe-4S] cluster is required as a cofactor.

It is found in the cytoplasm. Its subcellular location is the mitochondrion intermembrane space. In terms of biological role, component of the cytosolic iron-sulfur (Fe-S) protein assembly (CIA) machinery required for the maturation of extramitochondrial Fe-S proteins. Part of an electron transfer chain functioning in an early step of cytosolic Fe-S biogenesis, facilitating the de novo assembly of a [4Fe-4S] cluster on the scaffold complex CFD1-NBP35. Electrons are transferred to DRE2 from NADPH via the FAD- and FMN-containing protein TAH18. TAH18-DRE2 are also required for the assembly of the diferric tyrosyl radical cofactor of ribonucleotide reductase (RNR), probably by providing electrons for reduction during radical cofactor maturation in the catalytic small subunit RNR2. In Mycosarcoma maydis (Corn smut fungus), this protein is Fe-S cluster assembly protein DRE2.